Here is a 79-residue protein sequence, read N- to C-terminus: Potassium channel toxin Hge-beta-KTx (79 aa).

The N-terminal stretch at 1-21 (MAKSFFAAFLIIMLISSLVDG) is a signal peptide. The 32-residue stretch at 48–79 (EYMCPVVSSFCKQHCARLGKSGQCDLLECICS) folds into the BetaSPN-type CS-alpha/beta domain. 3 disulfide bridges follow: Cys51–Cys71, Cys58–Cys76, and Cys62–Cys78.

Expressed by the venom gland.

The protein localises to the secreted. Its function is as follows. The full peptide presents antibacterial and cytotoxic activities. The synthetic C-terminus (AA 33-76) inhibits voltage-gated potassium channels Kv1.1/KCNA1, Kv1.2/KCNA2, and Kv1.3/KCNA3. The sequence is that of Potassium channel toxin Hge-beta-KTx from Hoffmannihadrurus gertschi (Scorpion).